A 455-amino-acid polypeptide reads, in one-letter code: Kynurenine 3-monooxygenase (455 aa).

This sequence belongs to the aromatic-ring hydroxylase family. KMO subfamily. FAD serves as cofactor.

The catalysed reaction is L-kynurenine + NADPH + O2 + H(+) = 3-hydroxy-L-kynurenine + NADP(+) + H2O. It participates in cofactor biosynthesis; NAD(+) biosynthesis; quinolinate from L-kynurenine: step 1/3. Its function is as follows. Catalyzes the hydroxylation of L-kynurenine (L-Kyn) to form 3-hydroxy-L-kynurenine (L-3OHKyn). Required for synthesis of quinolinic acid. The sequence is that of Kynurenine 3-monooxygenase from Xanthomonas oryzae pv. oryzae (strain KACC10331 / KXO85).